Here is a 419-residue protein sequence, read N- to C-terminus: NF-kappa-B essential modulator (419 aa).

The disordered stretch occupies residues 1–48 (MSRPPWKSPLCEMVQPSGSPAGDQDMLGEESSLGKPAMLHVPSEQGTP). The segment at 1 to 197 (MSRPPWKSPL…REALEQRHSV (197 aa)) is required for interaction with and ubiquitination by MARCHF2. 2 positions are modified to phosphoserine; by IKKB: S31 and S43. The interaction with CHUK/IKBKB stretch occupies residues 44–111 (EQGTPETFQR…DLVVRLSLEK (68 aa)). A coiled-coil region spans residues 49-353 (ETFQRCLEEN…KTSCQESARI (305 aa)). A Phosphoserine modification is found at S68. Residues K111, K139, K143, K226, K246, and K264 each participate in a glycyl lysine isopeptide (Lys-Gly) (interchain with G-Cter in ubiquitin) cross-link. The interaction with TANK stretch occupies residues 150 to 257 (LGELQESQSR…SMVSSERNRG (108 aa)). Residues 242-350 (DNHMKSSMVS…SRLKTSCQES (109 aa)) form a ubiquitin-binding (UBAN) region. A self-association region spans residues 246–365 (KSSMVSSERN…MRKRHVEVSQ (120 aa)). Positions 251–419 (SSERNRGLQL…LQIHVMECIE (169 aa)) are required for interaction with TNFAIP3. A Glycyl lysine isopeptide (Lys-Gly) (interchain with G-Cter in SUMO); alternate cross-link involves residue K277. K277 is covalently cross-linked (Glycyl lysine isopeptide (Lys-Gly) (interchain with G-Cter in ubiquitin); alternate). Glycyl lysine isopeptide (Lys-Gly) (interchain with G-Cter in ubiquitin) cross-links involve residues K283, K285, K292, and K302. K309 is covalently cross-linked (Glycyl lysine isopeptide (Lys-Gly) (interchain with G-Cter in SUMO); alternate). A Glycyl lysine isopeptide (Lys-Gly) (interchain with G-Cter in ubiquitin); alternate cross-link involves residue K309. Glycyl lysine isopeptide (Lys-Gly) (interchain with G-Cter in ubiquitin) cross-links involve residues K321, K325, and K326. Residues 322–343 (LAEKKEFLQEQLEQLQREYSRL) form a leucine-zipper region. The interval 356 to 394 (MRKRHVEVSQPPLAPGPAHHSFHLNPSSQRRSPPDEPPK) is disordered. The residue at position 376 (S376) is a Phosphoserine; by IKKB. The segment at 382-419 (SSQRRSPPDEPPKFCCPKCQYQAPDIDTLQIHVMECIE) is interaction with CYLD. The residue at position 387 (S387) is a Phosphoserine. The segment at 389–419 (PDEPPKFCCPKCQYQAPDIDTLQIHVMECIE) adopts a CCHC NOA-type zinc-finger fold. Position 397 (C397) interacts with Zn(2+). K399 participates in a covalent cross-link: Glycyl lysine isopeptide (Lys-Gly) (interchain with G-Cter in ubiquitin). Zn(2+) is bound by residues C400, H413, and C417.

In terms of assembly, homodimer; disulfide-linked. Component of the I-kappa-B-kinase (IKK) core complex consisting of CHUK, IKBKB and IKBKG; probably four alpha/CHUK-beta/IKBKB dimers are associated with four gamma/IKBKG subunits. The IKK core complex seems to associate with regulatory or adapter proteins to form a IKK-signalosome holo-complex. The IKK complex associates with TERF2IP/RAP1, leading to promote IKK-mediated phosphorylation of RELA/p65. Part of a complex composed of NCOA2, NCOA3, CHUK/IKKA, IKBKB, IKBKG and CREBBP. Interacts with COPS3, CYLD, NALP2, TRPC4AP and PIDD1. Interacts with ATM; the complex is exported from the nucleus. Interacts with TRAF6. Interacts with IKBKE. Interacts with TANK; the interaction is enhanced by IKBKE and TBK1. Part of a ternary complex consisting of TANK, IKBKB and IKBKG. Interacts with ZFAND5. Interacts with RIPK2. Interacts with TNIP1 and TNFAIP3; TNIP1 facilitates the TNFAIP3-mediated de-ubiquitination of IKBKG. Interacts with TNFAIP3; the interaction is induced by TNF stimulation and by polyubiquitin. Binds (via UBAN region) polyubiquitin; binds both 'Lys-63'-linked and linear polyubiquitin, with higher affinity for linear ubiquitin. Interacts with NLRP10. Interacts with TANK; this interaction increases in response to DNA damage. Interacts with USP10; this interaction increases in response to DNA damage. Interacts with ZC3H12A; this interaction increases in response to DNA damage. Interacts with IFIT5; the interaction synergizes the recruitment of IKK to MAP3K7 and enhances IKK phosphorylation. Interacts with TRIM29; this interaction induces IKBKG/NEMO ubiquitination and proteolytic degradation. Interacts with TRIM13; this interaction leads to IKBKG/NEMO ubiquitination. Interacts with ARFIP2. Interacts with RIPK1. Interacts with (ubiquitinated) BCL10; interaction with polyubiquitinated BCL10 via both 'Lys-63'-linked and linear ubiquitin is required for TCR-induced NF-kappa-B activation. Interacts with MARCHF2; during the late stages of macrophage viral and bacterial infection; the interaction leads to ubiquitination and degradation of IKBKG/NEMO. Post-translationally, phosphorylation at Ser-68 attenuates aminoterminal homodimerization. Polyubiquitinated on Lys-285 through 'Lys-63'; the ubiquitination is mediated downstream of NOD2 and RIPK2 and probably plays a role in signaling by facilitating interactions with ubiquitin domain-containing proteins and activates the NF-kappa-B pathway. Polyubiquitinated on Lys-399 through 'Lys-63'; the ubiquitination is mediated by BCL10, MALT1 and TRAF6 and probably plays a role in signaling by facilitating interactions with ubiquitin domain-containing proteins and activates the NF-kappa-B pathway. Monoubiquitinated on Lys-277 and Lys-309; promotes nuclear export. Polyubiquitinated through 'Lys-27' by TRIM23; involved in antiviral innate and inflammatory responses. Linear polyubiquitinated on Lys-111, Lys-143, Lys-226, Lys-246, Lys-264, Lys-277, Lys-285, Lys-292, Lys-302, Lys-309 and Lys-326; the head-to-tail polyubiquitination is mediated by the LUBAC complex and plays a key role in NF-kappa-B activation. Deubiquitinated by USP10 in a TANK-dependent and -independent manner, leading to the negative regulation of NF-kappa-B signaling upon DNA damage. Ubiquitinated at Lys-326 by MARCHF2 following bacterial and viral infection which leads to its degradation. Polyubiquitinated via 'Lys-29'-linked ubiquitin; leading to lysosomal degradation. In terms of processing, sumoylated on Lys-277 and Lys-309 with SUMO1. Post-translationally, neddylated by TRIM40, resulting in stabilization of NFKBIA and down-regulation of NF-kappa-B activity.

Its subcellular location is the cytoplasm. It is found in the nucleus. In terms of biological role, regulatory subunit of the IKK core complex which phosphorylates inhibitors of NF-kappa-B thus leading to the dissociation of the inhibitor/NF-kappa-B complex and ultimately the degradation of the inhibitor. Its binding to scaffolding polyubiquitin plays a key role in IKK activation by multiple signaling receptor pathways. Can recognize and bind both 'Lys-63'-linked and linear polyubiquitin upon cell stimulation, with a much highr affinity for linear polyubiquitin. Could be implicated in NF-kappa-B-mediated protection from cytokine toxicity. Essential for viral activation of IRF3. Involved in TLR3- and IFIH1-mediated antiviral innate response; this function requires 'Lys-27'-linked polyubiquitination. This chain is NF-kappa-B essential modulator (IKBKG), found in Bos taurus (Bovine).